A 108-amino-acid polypeptide reads, in one-letter code: MNRRVTLGALAAAVGVGYYMTRHNRQASSRLEQKNAEIVRAVENEGQRFDKAVGETTEKAKSYLQSGKERVVDELDKPRENVKNVLSEAQAKGTEQAEALKKGTSKWF.

Position 56 is a phosphothreonine (Thr56). Residues 89–108 form a disordered region; the sequence is AQAKGTEQAEALKKGTSKWF.

It localises to the cytoplasm. This is an uncharacterized protein from Schizosaccharomyces pombe (strain 972 / ATCC 24843) (Fission yeast).